Consider the following 679-residue polypeptide: FAST kinase domain-containing protein 2, mitochondrial (679 aa).

2 positions are modified to phosphoserine: serine 113 and serine 126. The region spanning 607–664 is the RAP domain; it reads VAVLCVPKSAYCLNSNHLRGLMAMKIRHLNVMGFHVILIHNWELKKLKMEDAVTFVRK.

Belongs to the FAST kinase family. Monomer. Found in a complex with GRSF1, DDX28, DHX30 and FASTKD5. Associates with the 16S mitochondrial rRNA (16S mt-rRNA). Forms a regulatory protein-RNA complex, consisting of RCC1L, NGRN, RPUSD3, RPUSD4, TRUB2, FASTKD2 and 16S mt-rRNA.

It localises to the mitochondrion matrix. Its subcellular location is the mitochondrion nucleoid. Plays an important role in assembly of the mitochondrial large ribosomal subunit. As a component of a functional protein-RNA module, consisting of RCC1L, NGRN, RPUSD3, RPUSD4, TRUB2, FASTKD2 and 16S mitochondrial ribosomal RNA (16S mt-rRNA), controls 16S mt-rRNA abundance and is required for intra-mitochondrial translation. May play a role in mitochondrial apoptosis. This chain is FAST kinase domain-containing protein 2, mitochondrial (Fastkd2), found in Rattus norvegicus (Rat).